The chain runs to 247 residues: UPF0259 membrane protein BUsg_265 (247 aa).

Helical transmembrane passes span 20 to 40 (IKII…INVL), 82 to 102 (IFKI…IITL), 114 to 134 (IQFS…LNFI), 137 to 157 (FFIQ…SVLL), 188 to 208 (IVGT…TVFS), and 217 to 237 (FIFL…IVYL).

The protein belongs to the UPF0259 family.

The protein localises to the cell membrane. In Buchnera aphidicola subsp. Schizaphis graminum (strain Sg), this protein is UPF0259 membrane protein BUsg_265.